An 87-amino-acid chain; its full sequence is Large ribosomal subunit protein bL31B (87 aa).

The protein belongs to the bacterial ribosomal protein bL31 family. Type B subfamily. As to quaternary structure, part of the 50S ribosomal subunit.

This is Large ribosomal subunit protein bL31B from Pseudomonas paraeruginosa (strain DSM 24068 / PA7) (Pseudomonas aeruginosa (strain PA7)).